The chain runs to 281 residues: ATP phosphoribosyltransferase (281 aa).

The protein belongs to the ATP phosphoribosyltransferase family. Long subfamily. Mg(2+) serves as cofactor.

The protein localises to the cytoplasm. The enzyme catalyses 1-(5-phospho-beta-D-ribosyl)-ATP + diphosphate = 5-phospho-alpha-D-ribose 1-diphosphate + ATP. It functions in the pathway amino-acid biosynthesis; L-histidine biosynthesis; L-histidine from 5-phospho-alpha-D-ribose 1-diphosphate: step 1/9. Its activity is regulated as follows. Feedback inhibited by histidine. Functionally, catalyzes the condensation of ATP and 5-phosphoribose 1-diphosphate to form N'-(5'-phosphoribosyl)-ATP (PR-ATP). Has a crucial role in the pathway because the rate of histidine biosynthesis seems to be controlled primarily by regulation of HisG enzymatic activity. This is ATP phosphoribosyltransferase from Natronomonas pharaonis (strain ATCC 35678 / DSM 2160 / CIP 103997 / JCM 8858 / NBRC 14720 / NCIMB 2260 / Gabara) (Halobacterium pharaonis).